The chain runs to 422 residues: UPF0597 protein Kole_0595 (422 aa).

It belongs to the UPF0597 family.

The chain is UPF0597 protein Kole_0595 from Kosmotoga olearia (strain ATCC BAA-1733 / DSM 21960 / TBF 19.5.1).